Consider the following 439-residue polypeptide: L-cysteine:1D-myo-inositol 2-amino-2-deoxy-alpha-D-glucopyranoside ligase 2 (439 aa).

Cys-60 is a binding site for Zn(2+). L-cysteinyl-5'-AMP is bound by residues 60 to 63 (CGIT), Thr-75, and 98 to 100 (NVT). The 'HIGH' region motif lies at 62–72 (ITPYDSTHLGH). Residues 203–208 (ERGGDP) carry the 'ERGGDP' region motif. Trp-243 contributes to the L-cysteinyl-5'-AMP binding site. Residue Cys-247 coordinates Zn(2+). 265-267 (GVD) contacts L-cysteinyl-5'-AMP. His-272 is a binding site for Zn(2+). Residue Ile-299 coordinates L-cysteinyl-5'-AMP. Residues 305–309 (KMSKS) carry the 'KMSKS' region motif.

Belongs to the class-I aminoacyl-tRNA synthetase family. MshC subfamily. In terms of assembly, monomer. Zn(2+) serves as cofactor.

It carries out the reaction 1D-myo-inositol 2-amino-2-deoxy-alpha-D-glucopyranoside + L-cysteine + ATP = 1D-myo-inositol 2-(L-cysteinylamino)-2-deoxy-alpha-D-glucopyranoside + AMP + diphosphate + H(+). Functionally, catalyzes the ATP-dependent condensation of GlcN-Ins and L-cysteine to form L-Cys-GlcN-Ins. This is L-cysteine:1D-myo-inositol 2-amino-2-deoxy-alpha-D-glucopyranoside ligase 2 from Corynebacterium urealyticum (strain ATCC 43042 / DSM 7109).